The chain runs to 352 residues: N-acetyl-gamma-glutamyl-phosphate reductase (352 aa).

Cys-155 is an active-site residue.

It belongs to the NAGSA dehydrogenase family. Type 1 subfamily.

The protein resides in the cytoplasm. It carries out the reaction N-acetyl-L-glutamate 5-semialdehyde + phosphate + NADP(+) = N-acetyl-L-glutamyl 5-phosphate + NADPH + H(+). It functions in the pathway amino-acid biosynthesis; L-arginine biosynthesis; N(2)-acetyl-L-ornithine from L-glutamate: step 3/4. Its function is as follows. Catalyzes the NADPH-dependent reduction of N-acetyl-5-glutamyl phosphate to yield N-acetyl-L-glutamate 5-semialdehyde. The protein is N-acetyl-gamma-glutamyl-phosphate reductase of Gloeothece citriformis (strain PCC 7424) (Cyanothece sp. (strain PCC 7424)).